Here is a 47-residue protein sequence, read N- to C-terminus: Photosystem II reaction center protein K (47 aa).

Residues 1 to 10 (MAAFSLDLLA) constitute a propeptide that is removed on maturation. A helical transmembrane segment spans residues 19-39 (FGPLIDILPIIPVFFLLLAFV).

It belongs to the PsbK family. As to quaternary structure, PSII is composed of 1 copy each of membrane proteins PsbA, PsbB, PsbC, PsbD, PsbE, PsbF, PsbH, PsbI, PsbJ, PsbK, PsbL, PsbM, PsbT, PsbX, PsbY, PsbZ, Psb30/Ycf12, peripheral proteins PsbO, CyanoQ (PsbQ), PsbU, PsbV and a large number of cofactors. It forms dimeric complexes.

The protein resides in the cellular thylakoid membrane. Its function is as follows. One of the components of the core complex of photosystem II (PSII). PSII is a light-driven water:plastoquinone oxidoreductase that uses light energy to abstract electrons from H(2)O, generating O(2) and a proton gradient subsequently used for ATP formation. It consists of a core antenna complex that captures photons, and an electron transfer chain that converts photonic excitation into a charge separation. This is Photosystem II reaction center protein K from Synechococcus sp. (strain WH7803).